The chain runs to 26 residues: Acyl carrier protein (26 aa).

The region spanning 2–26 (SDIEQRIKQAVAEQLGMRAEEIKNE) is the Carrier domain.

Belongs to the acyl carrier protein (ACP) family. Post-translationally, 4'-phosphopantetheine is transferred from CoA to a specific serine of apo-ACP by AcpS. This modification is essential for activity because fatty acids are bound in thioester linkage to the sulfhydryl of the prosthetic group.

It is found in the cytoplasm. It functions in the pathway lipid metabolism; fatty acid biosynthesis. Carrier of the growing fatty acid chain in fatty acid biosynthesis. This chain is Acyl carrier protein (acpP), found in Acinetobacter calcoaceticus.